An 841-amino-acid chain; its full sequence is Copper-transporting P-type ATPase (841 aa).

6 helical membrane-spanning segments follow: residues 186 to 206 (LWVS…PMLG), 218 to 238 (ATFI…LPFF), 256 to 276 (IGLG…APGI), 285 to 305 (GAAV…VFVG), 445 to 465 (AVFV…WAAI), and 474 to 494 (GLLA…GLAT). The 4-aspartylphosphate intermediate role is filled by Asp530. The next 2 helical transmembrane spans lie at 602–622 (GIAD…DLGI) and 638–658 (GKTV…AVAD). Residues Asp729 and Asp733 each contribute to the Mg(2+) site. 2 helical membrane passes run 742 to 762 (VGIA…ITLV) and 800 to 820 (VAAG…IAAA).

The protein belongs to the cation transport ATPase (P-type) (TC 3.A.3) family. Type IB subfamily.

The protein resides in the cell membrane. It carries out the reaction Cu(2+)(in) + ATP + H2O = Cu(2+)(out) + ADP + phosphate + H(+). Its function is as follows. Involved in copper efflux. The sequence is that of Copper-transporting P-type ATPase (actP) from Rhizobium leguminosarum bv. viciae.